The sequence spans 97 residues: HssA/B-like protein 47 (97 aa).

The tract at residues 1-33 (MTLFSSISSISNPMTSSKSSIASFGSGTSMSSN) is disordered.

Belongs to the hssA/B family.

This is HssA/B-like protein 47 (hssl47) from Dictyostelium discoideum (Social amoeba).